Consider the following 188-residue polypeptide: Threonylcarbamoyl-AMP synthase (188 aa).

In terms of domain architecture, YrdC-like spans 3-188 (QLHPSDIKDI…RSGKILRNGQ (186 aa)).

This sequence belongs to the SUA5 family. TsaC subfamily.

The protein localises to the cytoplasm. It catalyses the reaction L-threonine + hydrogencarbonate + ATP = L-threonylcarbamoyladenylate + diphosphate + H2O. In terms of biological role, required for the formation of a threonylcarbamoyl group on adenosine at position 37 (t(6)A37) in tRNAs that read codons beginning with adenine. Catalyzes the conversion of L-threonine, HCO(3)(-)/CO(2) and ATP to give threonylcarbamoyl-AMP (TC-AMP) as the acyladenylate intermediate, with the release of diphosphate. The protein is Threonylcarbamoyl-AMP synthase of Shewanella baltica (strain OS195).